Consider the following 255-residue polypeptide: 4-hydroxy-tetrahydrodipicolinate reductase (255 aa).

Residues 8-13 (GATGRV), 88-90 (GTT), and 112-115 (ATNM) each bind NAD(+). Catalysis depends on histidine 144, which acts as the Proton donor/acceptor. Histidine 145 contacts (S)-2,3,4,5-tetrahydrodipicolinate. The Proton donor role is filled by lysine 148. Residue 154–155 (GT) participates in (S)-2,3,4,5-tetrahydrodipicolinate binding.

Belongs to the DapB family.

It is found in the cytoplasm. The enzyme catalyses (S)-2,3,4,5-tetrahydrodipicolinate + NAD(+) + H2O = (2S,4S)-4-hydroxy-2,3,4,5-tetrahydrodipicolinate + NADH + H(+). It catalyses the reaction (S)-2,3,4,5-tetrahydrodipicolinate + NADP(+) + H2O = (2S,4S)-4-hydroxy-2,3,4,5-tetrahydrodipicolinate + NADPH + H(+). It participates in amino-acid biosynthesis; L-lysine biosynthesis via DAP pathway; (S)-tetrahydrodipicolinate from L-aspartate: step 4/4. Its function is as follows. Catalyzes the conversion of 4-hydroxy-tetrahydrodipicolinate (HTPA) to tetrahydrodipicolinate. This Helicobacter hepaticus (strain ATCC 51449 / 3B1) protein is 4-hydroxy-tetrahydrodipicolinate reductase.